Reading from the N-terminus, the 138-residue chain is MKNRIVFLYASWVVALIAMLGSLYFSEIRKFIPCELCWYQRILMYPLVLILGIATFQGDTRVKKYVLPMAIIGAFISIMHYLEQKVPGFSGIKPCVSGVPCSGQYINWFGFITIPFLALIAFILIIIFMCLLKGEKSE.

The chain crosses the membrane as a helical span at residues 5–24; it reads IVFLYASWVVALIAMLGSLY. A disulfide bridge connects residues cysteine 34 and cysteine 37. 2 consecutive transmembrane segments (helical) span residues 39 to 58 and 65 to 82; these read YQRI…TFQG and YVLP…MHYL. The cysteines at positions 95 and 101 are disulfide-linked. Residues 110–132 form a helical membrane-spanning segment; sequence GFITIPFLALIAFILIIIFMCLL.

Belongs to the DsbB family. BdbC subfamily.

Its subcellular location is the cell membrane. The protein resides in the membrane raft. In terms of biological role, required for the stabilization, possibly via formation of a disulfide bond, of the obligatory competence protein ComGC. Not normally required for production of the secreted lantibiotic sublancin 168, although it can partially substitute for BdbB when the latter is absent. It may also be required for the stability of other secreted proteins. Not required for sporulation. This chain is Disulfide bond formation protein C (bdbC), found in Bacillus subtilis (strain 168).